A 296-amino-acid chain; its full sequence is 4-hydroxy-tetrahydrodipicolinate synthase (296 aa).

Position 50 (T50) interacts with pyruvate. Catalysis depends on Y138, which acts as the Proton donor/acceptor. The active-site Schiff-base intermediate with substrate is K166. I208 serves as a coordination point for pyruvate.

It belongs to the DapA family. Homotetramer; dimer of dimers.

Its subcellular location is the cytoplasm. It carries out the reaction L-aspartate 4-semialdehyde + pyruvate = (2S,4S)-4-hydroxy-2,3,4,5-tetrahydrodipicolinate + H2O + H(+). Its pathway is amino-acid biosynthesis; L-lysine biosynthesis via DAP pathway; (S)-tetrahydrodipicolinate from L-aspartate: step 3/4. Its function is as follows. Catalyzes the condensation of (S)-aspartate-beta-semialdehyde [(S)-ASA] and pyruvate to 4-hydroxy-tetrahydrodipicolinate (HTPA). The sequence is that of 4-hydroxy-tetrahydrodipicolinate synthase from Ruthia magnifica subsp. Calyptogena magnifica.